The sequence spans 247 residues: tRNA pseudouridine synthase A 1 (247 aa).

Catalysis depends on D53, which acts as the Nucleophile. Y111 is a binding site for substrate.

Belongs to the tRNA pseudouridine synthase TruA family. In terms of assembly, homodimer.

The enzyme catalyses uridine(38/39/40) in tRNA = pseudouridine(38/39/40) in tRNA. Functionally, formation of pseudouridine at positions 38, 39 and 40 in the anticodon stem and loop of transfer RNAs. The protein is tRNA pseudouridine synthase A 1 of Bacillus cereus (strain ZK / E33L).